We begin with the raw amino-acid sequence, 235 residues long: Leucyl/phenylalanyl-tRNA--protein transferase (235 aa).

This sequence belongs to the L/F-transferase family.

Its subcellular location is the cytoplasm. The enzyme catalyses N-terminal L-lysyl-[protein] + L-leucyl-tRNA(Leu) = N-terminal L-leucyl-L-lysyl-[protein] + tRNA(Leu) + H(+). It catalyses the reaction N-terminal L-arginyl-[protein] + L-leucyl-tRNA(Leu) = N-terminal L-leucyl-L-arginyl-[protein] + tRNA(Leu) + H(+). The catalysed reaction is L-phenylalanyl-tRNA(Phe) + an N-terminal L-alpha-aminoacyl-[protein] = an N-terminal L-phenylalanyl-L-alpha-aminoacyl-[protein] + tRNA(Phe). In terms of biological role, functions in the N-end rule pathway of protein degradation where it conjugates Leu, Phe and, less efficiently, Met from aminoacyl-tRNAs to the N-termini of proteins containing an N-terminal arginine or lysine. The sequence is that of Leucyl/phenylalanyl-tRNA--protein transferase from Cellvibrio japonicus (strain Ueda107) (Pseudomonas fluorescens subsp. cellulosa).